A 182-amino-acid polypeptide reads, in one-letter code: Large ribosomal subunit protein uL10 (182 aa).

The protein belongs to the universal ribosomal protein uL10 family. As to quaternary structure, part of the ribosomal stalk of the 50S ribosomal subunit. The N-terminus interacts with L11 and the large rRNA to form the base of the stalk. The C-terminus forms an elongated spine to which L12 dimers bind in a sequential fashion forming a multimeric L10(L12)X complex.

Forms part of the ribosomal stalk, playing a central role in the interaction of the ribosome with GTP-bound translation factors. The protein is Large ribosomal subunit protein uL10 of Microcystis aeruginosa (strain NIES-843 / IAM M-2473).